The sequence spans 268 residues: Shikimate dehydrogenase (NADP(+)) (268 aa).

Shikimate is bound by residues 13-15 and threonine 60; that span reads SLS. Lysine 64 serves as the catalytic Proton acceptor. An NADP(+)-binding site is contributed by glutamate 76. Residues asparagine 85 and aspartate 100 each coordinate shikimate. NADP(+) contacts are provided by residues 124 to 128, 148 to 153, and isoleucine 209; these read GAGGA and NRTMAR. Tyrosine 211 provides a ligand contact to shikimate. Glycine 232 contributes to the NADP(+) binding site.

The protein belongs to the shikimate dehydrogenase family. Homodimer.

The catalysed reaction is shikimate + NADP(+) = 3-dehydroshikimate + NADPH + H(+). Its pathway is metabolic intermediate biosynthesis; chorismate biosynthesis; chorismate from D-erythrose 4-phosphate and phosphoenolpyruvate: step 4/7. Functionally, involved in the biosynthesis of the chorismate, which leads to the biosynthesis of aromatic amino acids. Catalyzes the reversible NADPH linked reduction of 3-dehydroshikimate (DHSA) to yield shikimate (SA). This chain is Shikimate dehydrogenase (NADP(+)), found in Staphylococcus aureus (strain JH1).